A 135-amino-acid chain; its full sequence is ATP synthase epsilon chain (135 aa).

It belongs to the ATPase epsilon chain family. F-type ATPases have 2 components, CF(1) - the catalytic core - and CF(0) - the membrane proton channel. CF(1) has five subunits: alpha(3), beta(3), gamma(1), delta(1), epsilon(1). CF(0) has three main subunits: a, b and c.

The protein resides in the cell inner membrane. Produces ATP from ADP in the presence of a proton gradient across the membrane. The protein is ATP synthase epsilon chain of Rhodopseudomonas palustris (strain ATCC BAA-98 / CGA009).